Reading from the N-terminus, the 283-residue chain is Bifunctional protein FolD (283 aa).

Residues 164-166, Ser-189, and Ile-230 each bind NADP(+); that span reads GRS.

This sequence belongs to the tetrahydrofolate dehydrogenase/cyclohydrolase family. In terms of assembly, homodimer.

It carries out the reaction (6R)-5,10-methylene-5,6,7,8-tetrahydrofolate + NADP(+) = (6R)-5,10-methenyltetrahydrofolate + NADPH. The enzyme catalyses (6R)-5,10-methenyltetrahydrofolate + H2O = (6R)-10-formyltetrahydrofolate + H(+). The protein operates within one-carbon metabolism; tetrahydrofolate interconversion. Catalyzes the oxidation of 5,10-methylenetetrahydrofolate to 5,10-methenyltetrahydrofolate and then the hydrolysis of 5,10-methenyltetrahydrofolate to 10-formyltetrahydrofolate. In Lactobacillus delbrueckii subsp. bulgaricus (strain ATCC BAA-365 / Lb-18), this protein is Bifunctional protein FolD.